A 279-amino-acid polypeptide reads, in one-letter code: Bifunctional protein FolD 1 (279 aa).

NADP(+) is bound by residues 166–168 and serine 191; that span reads GRS.

The protein belongs to the tetrahydrofolate dehydrogenase/cyclohydrolase family. In terms of assembly, homodimer.

The enzyme catalyses (6R)-5,10-methylene-5,6,7,8-tetrahydrofolate + NADP(+) = (6R)-5,10-methenyltetrahydrofolate + NADPH. The catalysed reaction is (6R)-5,10-methenyltetrahydrofolate + H2O = (6R)-10-formyltetrahydrofolate + H(+). Its pathway is one-carbon metabolism; tetrahydrofolate interconversion. Catalyzes the oxidation of 5,10-methylenetetrahydrofolate to 5,10-methenyltetrahydrofolate and then the hydrolysis of 5,10-methenyltetrahydrofolate to 10-formyltetrahydrofolate. The chain is Bifunctional protein FolD 1 from Salinispora arenicola (strain CNS-205).